A 346-amino-acid chain; its full sequence is Phosphate acyltransferase (346 aa).

This sequence belongs to the PlsX family. As to quaternary structure, homodimer. Probably interacts with PlsY.

The protein resides in the cytoplasm. The enzyme catalyses a fatty acyl-[ACP] + phosphate = an acyl phosphate + holo-[ACP]. The protein operates within lipid metabolism; phospholipid metabolism. In terms of biological role, catalyzes the reversible formation of acyl-phosphate (acyl-PO(4)) from acyl-[acyl-carrier-protein] (acyl-ACP). This enzyme utilizes acyl-ACP as fatty acyl donor, but not acyl-CoA. This chain is Phosphate acyltransferase, found in Synechococcus elongatus (strain ATCC 33912 / PCC 7942 / FACHB-805) (Anacystis nidulans R2).